The primary structure comprises 230 residues: MKEERPIIALDFSSFEETKAFLDLFPAEEKLYVKIGMELYYAQGPDIVRYIKSLGHNVFLDLKLHDIPNTVRAAMAVLKELDIDMATVHAAGGVEMLKAAREGLGQGPTLIAVTQLTSTSEDQMRGDQNIQTSLLESVLHYSKGAAKAQLDGVVCSAQEVEAIKAVTPTGFNCLTPGIRPKGSNIGDQKRVMTPNQARRIGSDYIVVGRPITQAKDPVATYQAIKAEWAG.

Residues aspartate 11, lysine 34, 61 to 70 (DLKLHDIPNT), threonine 117, arginine 179, glutamine 188, glycine 208, and arginine 209 each bind substrate. Residue lysine 63 is the Proton donor of the active site.

Belongs to the OMP decarboxylase family. Type 1 subfamily. In terms of assembly, homodimer.

The catalysed reaction is orotidine 5'-phosphate + H(+) = UMP + CO2. The protein operates within pyrimidine metabolism; UMP biosynthesis via de novo pathway; UMP from orotate: step 2/2. Catalyzes the decarboxylation of orotidine 5'-monophosphate (OMP) to uridine 5'-monophosphate (UMP). This Streptococcus pyogenes serotype M49 (strain NZ131) protein is Orotidine 5'-phosphate decarboxylase.